The primary structure comprises 313 residues: uncharacterized protein (313 aa).

The HTH deoR-type domain maps to 2 to 57 (KLERLLAMVVLLISKKQVQAAELAELFEVSVRTIYRDIETINRAGIPIVTSQGSGG). Positions 19–38 (VQAAELAELFEVSVRTIYRD) form a DNA-binding region, H-T-H motif. The region spanning 131–210 (HTEDQKTLRE…KDLAILHQTF (80 aa)) is the WYL domain.

The protein localises to the cytoplasm. This is an uncharacterized protein from Bacillus subtilis (strain 168).